A 671-amino-acid polypeptide reads, in one-letter code: Pescadillo homolog (671 aa).

Coiled coils occupy residues 294–323 (NQAQ…ELFR) and 548–584 (QALR…TRKM). A BRCT domain is found at 317–403 (KVRELFRGLT…LVLPVTGYRI (87 aa)). 2 disordered regions span residues 552–577 (KAQE…VKRQ) and 634–671 (GLVN…KWVQ). Positions 634–651 (GLVNKRLEARRQRAEAKG) are enriched in basic and acidic residues.

The protein belongs to the pescadillo family.

It localises to the nucleus. Its subcellular location is the nucleolus. It is found in the nucleoplasm. Functionally, required for maturation of ribosomal RNAs and formation of the large ribosomal subunit. This is Pescadillo homolog from Leishmania major.